The primary structure comprises 688 residues: Glycine--tRNA ligase beta subunit (688 aa).

Belongs to the class-II aminoacyl-tRNA synthetase family. In terms of assembly, tetramer of two alpha and two beta subunits.

The protein localises to the cytoplasm. The catalysed reaction is tRNA(Gly) + glycine + ATP = glycyl-tRNA(Gly) + AMP + diphosphate. This chain is Glycine--tRNA ligase beta subunit, found in Shewanella oneidensis (strain ATCC 700550 / JCM 31522 / CIP 106686 / LMG 19005 / NCIMB 14063 / MR-1).